Reading from the N-terminus, the 163-residue chain is MGVTKKPDLNDPVLRAKLAKGMGHNYYGEPAWPNDLLYIFPVVILGTIACNVGLAVLEPSMIGEPADPFATPLEILPEWYFFPVFQILRTVPNKLLGVLLMVSVPLGLLTVPFLENVNKFQNPFRRPVATTVFLIGTAVALWLGIGATLPIEKSLTLGLFQID.

Transmembrane regions (helical) follow at residues 36–56 (LLYI…GLAV), 95–115 (LLGV…PFLE), and 131–151 (TVFL…TLPI).

This sequence belongs to the cytochrome b family. PetD subfamily. The 4 large subunits of the cytochrome b6-f complex are cytochrome b6, subunit IV (17 kDa polypeptide, petD), cytochrome f and the Rieske protein, while the 4 small subunits are petG, petL, petM and petN. The complex functions as a dimer.

It localises to the plastid. The protein resides in the chloroplast thylakoid membrane. In terms of biological role, component of the cytochrome b6-f complex, which mediates electron transfer between photosystem II (PSII) and photosystem I (PSI), cyclic electron flow around PSI, and state transitions. This is Cytochrome b6-f complex subunit 4 from Phalaenopsis aphrodite subsp. formosana (Moth orchid).